Here is a 347-residue protein sequence, read N- to C-terminus: Phenylalanine--tRNA ligase alpha subunit (347 aa).

Glu-261 serves as a coordination point for Mg(2+).

The protein belongs to the class-II aminoacyl-tRNA synthetase family. Phe-tRNA synthetase alpha subunit type 1 subfamily. In terms of assembly, tetramer of two alpha and two beta subunits. Mg(2+) is required as a cofactor.

The protein localises to the cytoplasm. The catalysed reaction is tRNA(Phe) + L-phenylalanine + ATP = L-phenylalanyl-tRNA(Phe) + AMP + diphosphate + H(+). This is Phenylalanine--tRNA ligase alpha subunit from Streptococcus thermophilus (strain CNRZ 1066).